The sequence spans 295 residues: GTPase Era (295 aa).

Positions 5 to 172 (YCGYAAIIGR…EQAVHQLMPE (168 aa)) constitute an Era-type G domain. Residues 13-20 (GRPNVGKS) form a G1 region. 13-20 (GRPNVGKS) serves as a coordination point for GTP. The segment at 39–43 (QTTRY) is G2. The interval 60–63 (DTPG) is G3. GTP contacts are provided by residues 60–64 (DTPGL) and 121–124 (NKVD). The interval 121-124 (NKVD) is G4. The segment at 151-153 (LSA) is G5. Residues 203-279 (LGQEIPYSLA…FLQLWVKVKS (77 aa)) enclose the KH type-2 domain.

Belongs to the TRAFAC class TrmE-Era-EngA-EngB-Septin-like GTPase superfamily. Era GTPase family. In terms of assembly, monomer.

The protein localises to the cytoplasm. It is found in the cell inner membrane. Its function is as follows. An essential GTPase that binds both GDP and GTP, with rapid nucleotide exchange. Plays a role in 16S rRNA processing and 30S ribosomal subunit biogenesis and possibly also in cell cycle regulation and energy metabolism. This Coxiella burnetii (strain CbuK_Q154) (Coxiella burnetii (strain Q154)) protein is GTPase Era.